The sequence spans 409 residues: L-cysteine:1D-myo-inositol 2-amino-2-deoxy-alpha-D-glucopyranoside ligase (409 aa).

Residue C43 coordinates Zn(2+). Residues 43 to 46, T58, and 81 to 83 contribute to the L-cysteinyl-5'-AMP site; these read CGIT and NVT. The 'HIGH' region motif lies at 45-55; sequence ITPYDATHMGH. The 'ERGGDP' region signature appears at 183–188; sequence ERGGDP. An L-cysteinyl-5'-AMP-binding site is contributed by W224. Residue C228 participates in Zn(2+) binding. 246 to 248 is a binding site for L-cysteinyl-5'-AMP; sequence GSD. H253 serves as a coordination point for Zn(2+). V280 serves as a coordination point for L-cysteinyl-5'-AMP. The short motif at 286-290 is the 'KMSKS' region element; sequence KMSKS.

The protein belongs to the class-I aminoacyl-tRNA synthetase family. MshC subfamily. In terms of assembly, monomer. Requires Zn(2+) as cofactor.

The catalysed reaction is 1D-myo-inositol 2-amino-2-deoxy-alpha-D-glucopyranoside + L-cysteine + ATP = 1D-myo-inositol 2-(L-cysteinylamino)-2-deoxy-alpha-D-glucopyranoside + AMP + diphosphate + H(+). Functionally, catalyzes the ATP-dependent condensation of GlcN-Ins and L-cysteine to form L-Cys-GlcN-Ins. This chain is L-cysteine:1D-myo-inositol 2-amino-2-deoxy-alpha-D-glucopyranoside ligase, found in Streptomyces scabiei (strain 87.22).